A 685-amino-acid polypeptide reads, in one-letter code: Amino acid transporter heavy chain SLC3A1 (685 aa).

Over residues 1-11 (MAEDKSKRDSI) the composition is skewed to basic and acidic residues. Positions 1–56 (MAEDKSKRDSIEMSMKGCQTNNGFVHNEDILEQTPDPGSSTDNLKHSTRGILGSQE) are disordered. Residues 1–87 (MAEDKSKRDS…GQARYRIPRE (87 aa)) are Cytoplasmic-facing. Phosphoserine is present on serine 10. The chain crosses the membrane as a helical; Signal-anchor for type II membrane protein span at residues 88–108 (ILFWLTVASVLVLIAATIAII). At 109–685 (ALSPKCLDWW…SVLNILYTSC (577 aa)) the chain is on the extracellular side. Position 214 (asparagine 214) interacts with Ca(2+). Residues asparagine 214 and asparagine 261 are each glycosylated (N-linked (GlcNAc...) asparagine). Cysteine 242 and cysteine 273 form a disulfide bridge. Positions 284, 318, 319, and 321 each coordinate Ca(2+). N-linked (GlcNAc...) asparagine glycosylation is found at asparagine 332, asparagine 495, asparagine 513, and asparagine 575. Intrachain disulfides connect cysteine 571–cysteine 666 and cysteine 673–cysteine 685.

In terms of assembly, disulfide-linked heterodimer composed of the catalytic light subunit SLC7A9 and the heavy subunit SLC3A1. The heterodimer is the minimal functional unit. Assembles in non-covalently linked heterotetramers (dimers of heterodimers) and higher order oligomers; the oligomerization is mediated by SLC3A1 likely to prevent degradation in the endoplasmic reticulum and facilitate heteromer trafficking to the plasma membrane. Disulfide-linked heterodimer composed of the catalytic light subunit SLC7A13 and the heavy subunit SLC3A1. Expressed in the brush border membrane in the kidney (at protein level). Predominantly expressed in the kidney, small intestine and pancreas. Weakly expressed in liver.

The protein localises to the cell membrane. It is found in the apical cell membrane. Acts as a chaperone that facilitates biogenesis and trafficking of functional transporter heteromers to the plasma membrane. Associates with SLC7A9 to form a functional transporter complex that mediates the electrogenic exchange between cationic amino acids and neutral amino acids, with a stoichiometry of 1:1. SLC7A9-SLC3A1 transporter has system b(0,+)-like activity with high affinity for extracellular cationic amino acids and L-cystine and lower affinity for intracellular neutral amino acids. Substrate exchange is driven by high concentration of intracellular neutral amino acids and the intracellular reduction of L-cystine to L-cysteine. SLC7A9-SLC3A1 acts as a major transporter for reabsorption of L-cystine and dibasic amino acids across the brush border membrane in early proximal tubules. Associates with SLC7A13 to form a functional complex that transports anionic and neutral amino acids via exchange or facilitated diffusion. SLC7A13-SLC3A1 may act as a major transporter for L-cystine in late proximal tubules, ensuring its reabsorption from the luminal fluid in exchange for cytosolic L-glutamate or L-aspartate. This is Amino acid transporter heavy chain SLC3A1 from Homo sapiens (Human).